A 503-amino-acid polypeptide reads, in one-letter code: Glutamate--tRNA ligase 1 (503 aa).

A 'HIGH' region motif is present at residues 17-27 (PSPTGFLHIGN). Positions 261 to 265 (KLSKR) match the 'KMSKS' region motif. Lysine 264 is a binding site for ATP.

The protein belongs to the class-I aminoacyl-tRNA synthetase family. Glutamate--tRNA ligase type 1 subfamily. Monomer.

The protein localises to the cytoplasm. The catalysed reaction is tRNA(Glu) + L-glutamate + ATP = L-glutamyl-tRNA(Glu) + AMP + diphosphate. Catalyzes the attachment of glutamate to tRNA(Glu) in a two-step reaction: glutamate is first activated by ATP to form Glu-AMP and then transferred to the acceptor end of tRNA(Glu). In Levilactobacillus brevis (strain ATCC 367 / BCRC 12310 / CIP 105137 / JCM 1170 / LMG 11437 / NCIMB 947 / NCTC 947) (Lactobacillus brevis), this protein is Glutamate--tRNA ligase 1.